The following is a 32-amino-acid chain: Trypsin inhibitor 3 (32 aa).

Intrachain disulfides connect C6-C23, C13-C25, and C19-C31.

It belongs to the protease inhibitor I7 (squash-type serine protease inhibitor) family.

It is found in the secreted. Its function is as follows. Inhibits trypsin. This is Trypsin inhibitor 3 from Cucurbita pepo (Vegetable marrow).